The sequence spans 421 residues: 5-hydroxytryptamine receptor 2 (421 aa).

At 1-21 the chain is on the extracellular side; that stretch reads MLCGRLRHTMNSTTCFFSHRT. Asn-11 is a glycosylation site (N-linked (GlcNAc...) asparagine). Residues 22–42 traverse the membrane as a helical segment; it reads VLIGIVGSLIIAVSVVGNVLV. The Cytoplasmic portion of the chain corresponds to 43-59; it reads CLAIFTEPILSHSKSKF. A helical membrane pass occupies residues 60 to 79; that stretch reads FIVSLAVADLLLALLVMTFA. The Extracellular segment spans residues 80-95; sequence LVNSLYGYWLFGETFC. Cys-95 and Cys-210 are disulfide-bonded. Residues 96–118 traverse the membrane as a helical segment; sequence FIWMSADVMCETASIFSICVISY. Residues 119–138 are Cytoplasmic-facing; sequence NRLKQVQKPLQYEEFMTTTR. The helical transmembrane segment at 139–160 threads the bilayer; it reads ALLIIASLWICSFVVSFVPFFL. Residues 161-213 are Extracellular-facing; the sequence is EWHELSMEEIKTIFKDLISDKVKTSDAHTFSFALEQTLGDNRTSNPKPECLFD. A helical transmembrane segment spans residues 214–234; sequence VHFIYSVIYSLFCFYIPCTLM. The Cytoplasmic segment spans residues 235 to 274; sequence LRNYLRLFLIAKKHHVRIKNLHRLHRNQGTQGSKAARTLT. The chain crosses the membrane as a helical span at residues 275-295; it reads IITGTFLACWLPFFIINPIEA. The Extracellular portion of the chain corresponds to 296-304; it reads VDEHLIPLE. A helical membrane pass occupies residues 305–325; it reads CFMVTIWLGYFNSCVNPIIYG. The Cytoplasmic portion of the chain corresponds to 326–421; that stretch reads TSNSKFRAAF…MLSESDTVFS (96 aa).

This sequence belongs to the G-protein coupled receptor 1 family. Central nervous system.

Its subcellular location is the cell membrane. This is one of the several different receptors for 5-hydroxytryptamine (serotonin). 5-HT plays important roles in various behavioral and physiological processes in aplysia. These include feeding, locomotion, circadian rhythm, learning and memory, synaptic plasticity, and synaptic growth. This receptor is mediated by G proteins that stimulate phospholipase C. The protein is 5-hydroxytryptamine receptor 2 (5HTB2) of Aplysia californica (California sea hare).